A 368-amino-acid polypeptide reads, in one-letter code: CST complex subunit STN1 (368 aa).

The interaction with CTC1 stretch occupies residues 2–192; it reads AVSLGDDDAD…KCYDQPFKMP (191 aa). Residues 58–162 constitute a DNA-binding region (OB); that stretch reads VDVLGIVVYK…EIKATSFYKV (105 aa). 2 winged helix-turn-helix (wHTH) regions span residues 201 to 295 and 296 to 368; these read AGGS…NVTE and QDKD…YIVL.

Belongs to the CTC1 family. In terms of assembly, component of the CST complex.

The protein resides in the nucleus. It is found in the chromosome. Its subcellular location is the telomere. In terms of biological role, component of the CST complex proposed to act as a specialized replication factor promoting DNA replication under conditions of replication stress or natural replication barriers such as the telomere duplex. The CST complex binds single-stranded DNA with high affinity in a sequence-independent manner, while isolated subunits bind DNA with low affinity by themselves. Initially the CST complex has been proposed to protect telomeres from DNA degradation. However, the CST complex has been shown to be involved in several aspects of telomere replication. The polypeptide is CST complex subunit STN1 (Danio rerio (Zebrafish)).